A 376-amino-acid polypeptide reads, in one-letter code: Chaperone protein DnaJ (376 aa).

Positions 5–69 constitute a J domain; it reads DYYEVLGISK…QKRAQYDQYG (65 aa). The CR-type zinc-finger motif lies at 133–215; it reads GKDAEIEIPR…CHGKGRVTKT (83 aa). 8 residues coordinate Zn(2+): Cys-146, Cys-149, Cys-163, Cys-166, Cys-189, Cys-192, Cys-203, and Cys-206. CXXCXGXG motif repeat units lie at residues 146–153, 163–170, 189–196, and 203–210; these read CDTCHGSG, CSHCGGKG, CQYCNGTG, and CPTCHGKG.

Belongs to the DnaJ family. Homodimer. Requires Zn(2+) as cofactor.

Its subcellular location is the cytoplasm. Participates actively in the response to hyperosmotic and heat shock by preventing the aggregation of stress-denatured proteins and by disaggregating proteins, also in an autonomous, DnaK-independent fashion. Unfolded proteins bind initially to DnaJ; upon interaction with the DnaJ-bound protein, DnaK hydrolyzes its bound ATP, resulting in the formation of a stable complex. GrpE releases ADP from DnaK; ATP binding to DnaK triggers the release of the substrate protein, thus completing the reaction cycle. Several rounds of ATP-dependent interactions between DnaJ, DnaK and GrpE are required for fully efficient folding. Also involved, together with DnaK and GrpE, in the DNA replication of plasmids through activation of initiation proteins. The protein is Chaperone protein DnaJ of Listeria monocytogenes serotype 4a (strain HCC23).